A 304-amino-acid chain; its full sequence is Non-specific ribonucleoside hydrolase RihC (304 aa).

His233 is a catalytic residue.

Belongs to the IUNH family. RihC subfamily.

Its function is as follows. Hydrolyzes both purine and pyrimidine ribonucleosides with a broad-substrate specificity. This Escherichia fergusonii (strain ATCC 35469 / DSM 13698 / CCUG 18766 / IAM 14443 / JCM 21226 / LMG 7866 / NBRC 102419 / NCTC 12128 / CDC 0568-73) protein is Non-specific ribonucleoside hydrolase RihC.